Reading from the N-terminus, the 159-residue chain is Cell number regulator 4 (159 aa).

A helical transmembrane segment spans residues 52–74 (LAGLLYCLLLHAGVAVVPCHCIY).

Belongs to the cornifelin family. As to expression, expressed in roots, coleoptiles, leaves, stalks, apical meristems, immature ears, endosperm, pericarp and tassel spikelets.

The protein resides in the membrane. This is Cell number regulator 4 (CNR4) from Zea mays (Maize).